A 663-amino-acid chain; its full sequence is UvrABC system protein B (663 aa).

Residues 30–417 enclose the Helicase ATP-binding domain; it reads DGIKAGKRHQ…TDKMVEQIIR (388 aa). 43–50 lines the ATP pocket; it reads GATGTGKT. The Beta-hairpin signature appears at 96 to 119; the sequence is YYDYYQPEAYVPSTDTFIEKDASI. The Helicase C-terminal domain occupies 434-600; that stretch reads QIDDLLSEIQ…TINKKIHDLI (167 aa). Residues 627–662 form the UVR domain; that stretch reads QKTIDNIEKEMKQAAKDLDFEKATELRDMLFELKAE.

Belongs to the UvrB family. In terms of assembly, forms a heterotetramer with UvrA during the search for lesions. Interacts with UvrC in an incision complex.

It localises to the cytoplasm. The UvrABC repair system catalyzes the recognition and processing of DNA lesions. A damage recognition complex composed of 2 UvrA and 2 UvrB subunits scans DNA for abnormalities. Upon binding of the UvrA(2)B(2) complex to a putative damaged site, the DNA wraps around one UvrB monomer. DNA wrap is dependent on ATP binding by UvrB and probably causes local melting of the DNA helix, facilitating insertion of UvrB beta-hairpin between the DNA strands. Then UvrB probes one DNA strand for the presence of a lesion. If a lesion is found the UvrA subunits dissociate and the UvrB-DNA preincision complex is formed. This complex is subsequently bound by UvrC and the second UvrB is released. If no lesion is found, the DNA wraps around the other UvrB subunit that will check the other stand for damage. In Staphylococcus aureus (strain Mu50 / ATCC 700699), this protein is UvrABC system protein B.